The following is a 376-amino-acid chain: Alanine racemase (376 aa).

Lys36 serves as the catalytic Proton acceptor; specific for D-alanine. N6-(pyridoxal phosphate)lysine is present on Lys36. Arg134 contributes to the substrate binding site. The Proton acceptor; specific for L-alanine role is filled by Tyr266. Residue Met314 participates in substrate binding.

The protein belongs to the alanine racemase family. Pyridoxal 5'-phosphate serves as cofactor.

It carries out the reaction L-alanine = D-alanine. It functions in the pathway amino-acid biosynthesis; D-alanine biosynthesis; D-alanine from L-alanine: step 1/1. In terms of biological role, catalyzes the interconversion of L-alanine and D-alanine. May also act on other amino acids. The sequence is that of Alanine racemase (alr) from Nitratidesulfovibrio vulgaris (strain ATCC 29579 / DSM 644 / CCUG 34227 / NCIMB 8303 / VKM B-1760 / Hildenborough) (Desulfovibrio vulgaris).